Reading from the N-terminus, the 70-residue chain is MGSFSVWHWLIVLVIVLVLFGRGKIPELMGDVAKGIKSFKKGMADEDQTPPPADANANAKTVDHKADEIK.

A helical transmembrane segment spans residues Met-1 to Gly-21. The tract at residues Gly-42–Lys-70 is disordered. Over residues Thr-61–Lys-70 the composition is skewed to basic and acidic residues.

It belongs to the TatA/E family. The Tat system comprises two distinct complexes: a TatABC complex, containing multiple copies of TatA, TatB and TatC subunits, and a separate TatA complex, containing only TatA subunits. Substrates initially bind to the TatABC complex, which probably triggers association of the separate TatA complex to form the active translocon.

It localises to the cell inner membrane. Its function is as follows. Part of the twin-arginine translocation (Tat) system that transports large folded proteins containing a characteristic twin-arginine motif in their signal peptide across membranes. TatA could form the protein-conducting channel of the Tat system. The protein is Sec-independent protein translocase protein TatA of Agrobacterium fabrum (strain C58 / ATCC 33970) (Agrobacterium tumefaciens (strain C58)).